Here is a 340-residue protein sequence, read N- to C-terminus: Proline-rich transmembrane protein 2 (340 aa).

The disordered stretch occupies residues 1-261; the sequence is MAASSSEISE…AGPGVEGGEG (261 aa). At 1–268 the chain is on the cytoplasmic side; it reads MAASSSEISE…GEGTQKPRDY (268 aa). Residue Ser-28 is modified to Phosphoserine. The residue at position 74 (Thr-74) is a Phosphothreonine. Composition is skewed to pro residues over residues 131 to 155 and 197 to 207; these read PPEP…PKPA and APEPHSPPSKK. Phosphoserine is present on Ser-238. Arg-240 is modified (omega-N-methylarginine). Phosphoserine is present on residues Ser-248 and Ser-249. The segment at residues 269–289 is an intramembrane region (helical); sequence IILAILSCFCPMWPVNIVAFA. At 290-317 the chain is on the cytoplasmic side; the sequence is YAVMSRNSLQQGDVDGAQRLGRVAKLLS. The chain crosses the membrane as a helical span at residues 318–338; sequence IVALVGGVLIIIASCVINLGV. At 339–340 the chain is on the extracellular side; that stretch reads YK.

The protein belongs to the CD225/Dispanin family. In terms of assembly, component of the outer core of AMPAR complex. AMPAR complex consists of an inner core made of 4 pore-forming GluA/GRIA proteins (GRIA1, GRIA2, GRIA3 and GRIA4) and 4 major auxiliary subunits arranged in a twofold symmetry. One of the two pairs of distinct binding sites is occupied either by CNIH2, CNIH3 or CACNG2, CACNG3. The other harbors CACNG2, CACNG3, CACNG4, CACNG8 or GSG1L. This inner core of AMPAR complex is complemented by outer core constituents binding directly to the GluA/GRIA proteins at sites distinct from the interaction sites of the inner core constituents. Outer core constituents include at least PRRT1, PRRT2, CKAMP44/SHISA9, FRRS1L and NRN1. The proteins of the inner and outer core serve as a platform for other, more peripherally associated AMPAR constituents. Alone or in combination, these auxiliary subunits control the gating and pharmacology of the AMPAR complex and profoundly impact their biogenesis and protein processing. Interacts with intersectin 1/ITSN1. Interacts with SNARE complex components, including SNAP25, STX1A, SYT1 and SYT2; this interaction may inhibit SNARE complex formation.

The protein localises to the cell membrane. Its subcellular location is the presynaptic cell membrane. The protein resides in the synapse. It is found in the cell projection. It localises to the axon. The protein localises to the cytoplasmic vesicle. Its subcellular location is the secretory vesicle. The protein resides in the synaptic vesicle membrane. It is found in the postsynaptic density membrane. It localises to the dendritic spine. As a component of the outer core of AMPAR complex, may be involved in synaptic transmission in the central nervous system. In hippocampal neurons, in presynaptic terminals, plays an important role in the final steps of neurotransmitter release, possibly by regulating Ca(2+)-sensing. In the cerebellum, may inhibit SNARE complex formation and down-regulate short-term facilitation. The chain is Proline-rich transmembrane protein 2 (PRRT2) from Pongo abelii (Sumatran orangutan).